A 394-amino-acid chain; its full sequence is S-adenosylmethionine synthase (394 aa).

His-15 is a binding site for ATP. Position 17 (Asp-17) interacts with Mg(2+). Glu-43 contacts K(+). The L-methionine site is built by Glu-56 and Gln-99. The segment at 99–109 (QSPDIALGVNK) is flexible loop. ATP-binding positions include 173–175 (DGK), 239–240 (RF), Asp-248, 254–255 (RK), Ala-271, and Lys-275. An L-methionine-binding site is contributed by Asp-248. Lys-279 contacts L-methionine.

Belongs to the AdoMet synthase family. As to quaternary structure, homotetramer; dimer of dimers. Mg(2+) is required as a cofactor. K(+) serves as cofactor.

It is found in the cytoplasm. It carries out the reaction L-methionine + ATP + H2O = S-adenosyl-L-methionine + phosphate + diphosphate. Its pathway is amino-acid biosynthesis; S-adenosyl-L-methionine biosynthesis; S-adenosyl-L-methionine from L-methionine: step 1/1. In terms of biological role, catalyzes the formation of S-adenosylmethionine (AdoMet) from methionine and ATP. The overall synthetic reaction is composed of two sequential steps, AdoMet formation and the subsequent tripolyphosphate hydrolysis which occurs prior to release of AdoMet from the enzyme. The sequence is that of S-adenosylmethionine synthase from Kosmotoga olearia (strain ATCC BAA-1733 / DSM 21960 / TBF 19.5.1).